A 452-amino-acid chain; its full sequence is Maltoporin (452 aa).

A signal peptide spans 1-25 (MMITLRKLPLAVAVAAGVMSAQAMA).

It belongs to the porin LamB (TC 1.B.3) family. As to quaternary structure, homotrimer formed of three 18-stranded antiparallel beta-barrels, containing three independent channels.

It is found in the cell outer membrane. The catalysed reaction is beta-maltose(in) = beta-maltose(out). In terms of biological role, involved in the transport of maltose and maltodextrins. This chain is Maltoporin, found in Salmonella newport (strain SL254).